The following is a 40-amino-acid chain: Photosystem II reaction center protein J (40 aa).

Residues 8–28 (IPLWVIGTVAGILVIGLIGIF) traverse the membrane as a helical segment.

It belongs to the PsbJ family. As to quaternary structure, PSII is composed of 1 copy each of membrane proteins PsbA, PsbB, PsbC, PsbD, PsbE, PsbF, PsbH, PsbI, PsbJ, PsbK, PsbL, PsbM, PsbT, PsbX, PsbY, PsbZ, Psb30/Ycf12, at least 3 peripheral proteins of the oxygen-evolving complex and a large number of cofactors. It forms dimeric complexes.

The protein resides in the plastid. The protein localises to the chloroplast thylakoid membrane. Functionally, one of the components of the core complex of photosystem II (PSII). PSII is a light-driven water:plastoquinone oxidoreductase that uses light energy to abstract electrons from H(2)O, generating O(2) and a proton gradient subsequently used for ATP formation. It consists of a core antenna complex that captures photons, and an electron transfer chain that converts photonic excitation into a charge separation. This is Photosystem II reaction center protein J from Lepidium virginicum (Virginia pepperweed).